The chain runs to 539 residues: Ell-associated factor Eaf (539 aa).

The segment at 119–539 (TRSEMTHHKP…SSNSSDDDDD (421 aa)) is disordered. Polar residues predominate over residues 132–146 (PATNINHNNIPMSTN). Residues 151 to 163 (GPGPGPGSGPSPP) show a composition bias toward pro residues. Residues 174–195 (KLENSTMRISSKTKVSTGSRRN) show a composition bias toward polar residues. Ser-205 carries the post-translational modification Phosphoserine. Residues 220–238 (RSPQSAPAWNANNAQQTLP) are compositionally biased toward polar residues. 3 stretches are compositionally biased toward low complexity: residues 267-278 (SGSSTGSSTGQP), 309-337 (MHQN…YGRG), and 345-375 (NNYA…SHHS). The span at 420 to 435 (DSSDSDSGSESDDSTD) shows a compositional bias: acidic residues. Low complexity-rich tracts occupy residues 461 to 493 (HQQL…QPQQ) and 520 to 533 (NDLL…SSNS).

Belongs to the EAF family.

It localises to the nucleus. In terms of biological role, promotes transcriptional elongation by Su(Tpl)/ELL. Essential for development. This Drosophila willistoni (Fruit fly) protein is Ell-associated factor Eaf.